Reading from the N-terminus, the 155-residue chain is Interleukin-2 (155 aa).

A signal peptide spans 1–20 (MYKIQLLSCIALTLALVANG). O-linked (GalNAc...) threonine glycosylation occurs at Thr-23. The cysteines at positions 79 and 127 are disulfide-linked.

It belongs to the IL-2 family.

The protein localises to the secreted. Cytokine produced by activated CD4-positive helper T-cells and to a lesser extend activated CD8-positive T-cells and natural killer (NK) cells that plays pivotal roles in the immune response and tolerance. Binds to a receptor complex composed of either the high-affinity trimeric IL-2R (IL2RA/CD25, IL2RB/CD122 and IL2RG/CD132) or the low-affinity dimeric IL-2R (IL2RB and IL2RG). Interaction with the receptor leads to oligomerization and conformation changes in the IL-2R subunits resulting in downstream signaling starting with phosphorylation of JAK1 and JAK3. In turn, JAK1 and JAK3 phosphorylate the receptor to form a docking site leading to the phosphorylation of several substrates including STAT5. This process leads to activation of several pathways including STAT, phosphoinositide-3-kinase/PI3K and mitogen-activated protein kinase/MAPK pathways. Functions as a T-cell growth factor and can increase NK-cell cytolytic activity as well. Promotes strong proliferation of activated B-cells and subsequently immunoglobulin production. Plays a pivotal role in regulating the adaptive immune system by controlling the survival and proliferation of regulatory T-cells, which are required for the maintenance of immune tolerance. Moreover, participates in the differentiation and homeostasis of effector T-cell subsets, including Th1, Th2, Th17 as well as memory CD8-positive T-cells. This is Interleukin-2 (IL2) from Bubalus bubalis (Domestic water buffalo).